A 250-amino-acid chain; its full sequence is 7-cyano-7-deazaguanine synthase (250 aa).

21 to 31 (FSGGQDSSVCL) serves as a coordination point for ATP. The Zn(2+) site is built by Cys-209, Cys-224, Cys-227, and Cys-230.

This sequence belongs to the QueC family. Requires Zn(2+) as cofactor.

The catalysed reaction is 7-carboxy-7-deazaguanine + NH4(+) + ATP = 7-cyano-7-deazaguanine + ADP + phosphate + H2O + H(+). It functions in the pathway purine metabolism; 7-cyano-7-deazaguanine biosynthesis. Catalyzes the ATP-dependent conversion of 7-carboxy-7-deazaguanine (CDG) to 7-cyano-7-deazaguanine (preQ(0)). The polypeptide is 7-cyano-7-deazaguanine synthase (Caulobacter sp. (strain K31)).